We begin with the raw amino-acid sequence, 174 residues long: Nicotinamide-nucleotide adenylyltransferase (174 aa).

The protein belongs to the archaeal NMN adenylyltransferase family.

Its subcellular location is the cytoplasm. The catalysed reaction is beta-nicotinamide D-ribonucleotide + ATP + H(+) = diphosphate + NAD(+). The protein operates within cofactor biosynthesis; NAD(+) biosynthesis; NAD(+) from nicotinamide D-ribonucleotide: step 1/1. In Archaeoglobus fulgidus (strain ATCC 49558 / DSM 4304 / JCM 9628 / NBRC 100126 / VC-16), this protein is Nicotinamide-nucleotide adenylyltransferase.